Reading from the N-terminus, the 1023-residue chain is Sodium/potassium-transporting ATPase subunit alpha-1 (1023 aa).

The propeptide occupies 1–5; sequence MGLGK. A compositionally biased stretch (basic and acidic residues) spans 1–11; sequence MGLGKGKDEYK. Residues 1–33 form a disordered region; the sequence is MGLGKGKDEYKLAATSEDGGKKDKKAKAKKDMD. Residues 6–87 are Cytoplasmic-facing; the sequence is GKDEYKLAAT…NALTPPPTTP (82 aa). At Ser-16 the chain carries Phosphoserine; by PKC. An interaction with phosphoinositide-3 kinase region spans residues 82-84; the sequence is PPP. Residues 88–108 form a helical membrane-spanning segment; the sequence is EWVKFCKQLFGGFSMLLWIGA. Residues 109-131 are Extracellular-facing; it reads ILCFLAYGIQAASEDEPANDNLY. Residues 132–152 traverse the membrane as a helical segment; that stretch reads LGIVLSAVVIITGCFSYYQEA. Topologically, residues 153 to 288 are cytoplasmic; sequence KSSKIMESFK…GGKTPIAIEI (136 aa). Residues 216–237 form a disordered region; that stretch reads SSLTGESEPQTRSPDFSNENPL. The chain crosses the membrane as a helical span at residues 289–308; that stretch reads EHFIHIITGVAVFLGVSFFI. The Extracellular portion of the chain corresponds to 309–320; sequence LSLILGYNWLEA. A helical membrane pass occupies residues 321–338; that stretch reads VIFLIGIIVANVPEGLLA. Residues 339–772 lie on the Cytoplasmic side of the membrane; the sequence is TVTVCLTLTA…EEGRLIFDNL (434 aa). Catalysis depends on Asp-376, which acts as the 4-aspartylphosphate intermediate. Lys-487 is an ATP binding site. Positions 717 and 721 each coordinate Mg(2+). Residues 773 to 792 traverse the membrane as a helical segment; that stretch reads KKSIAYTLTSNIPEISPFLL. The Extracellular portion of the chain corresponds to 793-802; that stretch reads FIIANIPLPL. Residues 803–823 traverse the membrane as a helical segment; that stretch reads GTVTILCIDLGTDMVPAISLA. The Cytoplasmic segment spans residues 824–843; the sequence is YEKAESDIMKRQPRNPKTDK. The helical transmembrane segment at 844 to 866 threads the bilayer; it reads LVNERLISIAYGQIGMMQATAGF. Topologically, residues 867-918 are extracellular; the sequence is FTYFVILAENGFLPMDLIGVRVLWDDKYVNDLEDSYGQQWTYERRKIVEYSC. The helical transmembrane segment at 919-938 threads the bilayer; it reads HTAFFASIVIVQWADLIICK. Residues 939–951 lie on the Cytoplasmic side of the membrane; the sequence is TRRNSIVQQGMTN. Ser-943 carries the post-translational modification Phosphoserine; by PKA. The helical transmembrane segment at 952–970 threads the bilayer; it reads RILIFGLFEETALAAFLSY. The Extracellular segment spans residues 971-985; that stretch reads CPGMDVALRMYPMKP. A helical transmembrane segment spans residues 986–1006; sequence LWWFCAFPYSLLIFLYDEARR. Topologically, residues 1007–1023 are cytoplasmic; that stretch reads YILRRNPGGWVEKETYY.

The protein belongs to the cation transport ATPase (P-type) (TC 3.A.3) family. Type IIC subfamily. The sodium/potassium-transporting ATPase is composed of a catalytic alpha subunit, an auxiliary non-catalytic beta subunit and an additional regulatory subunit.

Its subcellular location is the cell membrane. It localises to the sarcolemma. The catalysed reaction is K(+)(out) + Na(+)(in) + ATP + H2O = K(+)(in) + Na(+)(out) + ADP + phosphate + H(+). In terms of biological role, this is the catalytic component of the active enzyme, which catalyzes the hydrolysis of ATP coupled with the exchange of sodium and potassium ions across the plasma membrane. This action creates the electrochemical gradient of sodium and potassium ions, providing the energy for active transport of various nutrients. The polypeptide is Sodium/potassium-transporting ATPase subunit alpha-1 (atp1a1) (Oreochromis mossambicus (Mozambique tilapia)).